The sequence spans 357 residues: Phospho-N-acetylmuramoyl-pentapeptide-transferase (357 aa).

A run of 10 helical transmembrane segments spans residues A23–Y43, T70–L90, S91–I111, L127–I147, Y171–T191, G196–S216, L236–Y256, V260–L280, L286–I306, and L334–L354.

It belongs to the glycosyltransferase 4 family. MraY subfamily. The cofactor is Mg(2+).

The protein resides in the cell inner membrane. The enzyme catalyses UDP-N-acetyl-alpha-D-muramoyl-L-alanyl-gamma-D-glutamyl-meso-2,6-diaminopimeloyl-D-alanyl-D-alanine + di-trans,octa-cis-undecaprenyl phosphate = di-trans,octa-cis-undecaprenyl diphospho-N-acetyl-alpha-D-muramoyl-L-alanyl-D-glutamyl-meso-2,6-diaminopimeloyl-D-alanyl-D-alanine + UMP. Its pathway is cell wall biogenesis; peptidoglycan biosynthesis. Functionally, catalyzes the initial step of the lipid cycle reactions in the biosynthesis of the cell wall peptidoglycan: transfers peptidoglycan precursor phospho-MurNAc-pentapeptide from UDP-MurNAc-pentapeptide onto the lipid carrier undecaprenyl phosphate, yielding undecaprenyl-pyrophosphoryl-MurNAc-pentapeptide, known as lipid I. The chain is Phospho-N-acetylmuramoyl-pentapeptide-transferase from Buchnera aphidicola subsp. Acyrthosiphon pisum (strain Tuc7).